Consider the following 321-residue polypeptide: uncharacterized protein (321 aa).

The Extracellular portion of the chain corresponds to 1 to 6 (MDIIRK). Residues 7 to 29 (ISHFAGQTFGIWVIVFAVLGFSF) traverse the membrane as a helical segment. The Cytoplasmic segment spans residues 30-34 (PSLFT). Residues 35-57 (WISSYITIFLGIIMFGMGLTLQA) form a helical membrane-spanning segment. Over 58–69 (DDFKELVRKPWQ) the chain is Extracellular. The helical transmembrane segment at 70–92 (VIIGVIAQYTIMPLVAFGLAFGL) threads the bilayer. At 93–97 (HLPAE) the chain is on the cytoplasmic side. A helical transmembrane segment spans residues 98–120 (IAVGVILVGCCPGGTASNVMTFL). Residues 121-129 (AKGNTALSV) lie on the Extracellular side of the membrane. Residues 130 to 150 (AVTTISTLLAPVVTPLLIMLF) traverse the membrane as a helical segment. The Cytoplasmic segment spans residues 151–159 (AKEWLPVSP). A helical membrane pass occupies residues 160–180 (GSLFISILQAVLFPIIAGLIV). At 181 to 190 (KMFFRKQVAK) the chain is on the extracellular side. A helical transmembrane segment spans residues 191 to 211 (AVHALPLVSVIGIVAIVSAVV). Residues 212–221 (SGNRENLLQS) are Cytoplasmic-facing. A helical membrane pass occupies residues 222 to 242 (GLLIFSVVILHNGIGYLLGFL). The Extracellular segment spans residues 243–267 (CAKLLKMDYPSQKAIAIEVGMQNSG). Residues 268 to 288 (LGAALATAHFSPLSAVPSAIF) traverse the membrane as a helical segment. Residues 289–321 (SVWHNLSGSMLATYWSKKVKKKQAGSKSSNLSL) are Cytoplasmic-facing.

The protein belongs to the bile acid:sodium symporter (BASS) (TC 2.A.28) family.

It is found in the cell membrane. This is an uncharacterized protein from Bacillus subtilis (strain 168).